The sequence spans 271 residues: Energy-coupling factor transporter ATP-binding protein EcfA (271 aa).

An ABC transporter domain is found at 2 to 231 (ISIQNLTFYY…PLFLQQYKLN (230 aa)). 34-41 (GHNGSGKS) serves as a coordination point for ATP.

The protein belongs to the ABC transporter superfamily. Energy-coupling factor EcfA family. Forms a stable energy-coupling factor (ECF) transporter complex composed of 2 membrane-embedded substrate-binding proteins (S component), 2 ATP-binding proteins (A component) and 2 transmembrane proteins (T component).

The protein resides in the cell membrane. ATP-binding (A) component of a common energy-coupling factor (ECF) ABC-transporter complex. Unlike classic ABC transporters this ECF transporter provides the energy necessary to transport a number of different substrates. The protein is Energy-coupling factor transporter ATP-binding protein EcfA of Onion yellows phytoplasma (strain OY-M).